A 384-amino-acid chain; its full sequence is WD repeat-containing protein 74 (384 aa).

6 WD repeats span residues 40-80 (RREE…FLSQ), 83-122 (CPGGEGTFRGLAQADGTLITCVDSGILRVWCENDKEASSD), 128-168 (KVGP…EPVF), 179-220 (DLRV…RRPV), 224-266 (TYGE…GCLK), and 267-306 (GLAGSVRGLQCHPSKPLLASCGLDRVLRIHRIRNPRGLEH). S214 bears the Phosphoserine mark. K311 bears the N6-methyllysine mark. The interval 320-384 (SGRDNWEDEP…KKKRPGSTSP (65 aa)) is required for nucleolar and nuclear location. The disordered stretch occupies residues 323–384 (DNWEDEPQEP…KKKRPGSTSP (62 aa)). The segment covering 371–384 (QRRKKKKRPGSTSP) has biased composition (basic residues).

In terms of assembly, isoform 1 interacts (through WDR repeats) with NVL; the interaction is independent of RNA or pre-60S ribosome particles. Isoform 2 does not interact with NVL. Interacts with MTREX; the interaction dissociation in a late stage of rRNA synthesis is required for appropriate maturation of pre-60S particles and depends on the ATPase activity of NVL.

It localises to the nucleus. It is found in the nucleolus. Functionally, regulatory protein of the MTREX-exosome complex involved in the synthesis of the 60S ribosomal subunit. Participates in an early cleavage of the pre-rRNA processing pathway in cooperation with NVL. Required for blastocyst formation, is necessary for RNA transcription, processing and/or stability during preimplantation development. This chain is WD repeat-containing protein 74 (Wdr74), found in Mus musculus (Mouse).